A 118-amino-acid polypeptide reads, in one-letter code: Small ribosomal subunit protein uS13 (118 aa).

Residues 94 to 118 are disordered; sequence SLPLRGQRTKTNARTRKGPRKPIKK.

This sequence belongs to the universal ribosomal protein uS13 family. As to quaternary structure, part of the 30S ribosomal subunit. Forms a loose heterodimer with protein S19. Forms two bridges to the 50S subunit in the 70S ribosome.

Located at the top of the head of the 30S subunit, it contacts several helices of the 16S rRNA. In the 70S ribosome it contacts the 23S rRNA (bridge B1a) and protein L5 of the 50S subunit (bridge B1b), connecting the 2 subunits; these bridges are implicated in subunit movement. Contacts the tRNAs in the A and P-sites. This is Small ribosomal subunit protein uS13 from Shewanella amazonensis (strain ATCC BAA-1098 / SB2B).